A 792-amino-acid polypeptide reads, in one-letter code: Cis-abienol synthase, chloroplastic (792 aa).

The N-terminal 37 residues, 1 to 37 (MVLGLRSKIIPLPDHKLGNIKLGSVTNAICHRPCRVR), are a transit peptide targeting the chloroplast. Mg(2+)-binding residues include aspartate 539, aspartate 543, asparagine 684, and glutamate 692. The DDXXD motif signature appears at 539-543 (DDFFD).

Belongs to the terpene synthase family. Requires Mg(2+) as cofactor. Expressed specifically in trichomes.

Its subcellular location is the plastid. It is found in the chloroplast. It carries out the reaction 8-hydroxycopalyl diphosphate = cis-abienol + diphosphate. Its pathway is secondary metabolite biosynthesis; terpenoid biosynthesis. In terms of biological role, involved in the biosynthesis of cis-abienol, a labdane diterpene that can be used as synthesis precursor of ambergris substitution fragance products. The polypeptide is Cis-abienol synthase, chloroplastic (Nicotiana tabacum (Common tobacco)).